Consider the following 120-residue polypeptide: uncharacterized protein (120 aa).

Residues 1 to 19 (MTSFAVVARLITRAPRVRA) form the signal peptide. 2 disordered regions span residues 48–71 (VAKKADEGAQTISDAAGNLKDKAK) and 90–120 (DTVTGKTEETKESIKATAKTVERSMNTKNLK). Over residues 90–103 (DTVTGKTEETKESI) the composition is skewed to basic and acidic residues.

This is an uncharacterized protein from Arabidopsis thaliana (Mouse-ear cress).